Consider the following 3291-residue polypeptide: Protocadherin-16 (3291 aa).

The first 35 residues, 1–35 (MQEELSVALSCPGMKSLGTLLPLLVLLGTTVPGIR), serve as a signal peptide directing secretion. The Extracellular segment spans residues 36–2933 (GQAGSLDLQI…PDLNLLLVGA (2898 aa)). Cadherin domains are found at residues 37–137 (QAGS…APAF), 138–249 (PQAR…APAF), 250–356 (NQSR…QPSM), 369–466 (VSEA…APAF), 476–572 (LPEV…EPQF), 573–679 (QRTF…PPQF), 680–784 (YPRE…PPIF), 785–888 (EQLQ…SPAF), 889–994 (PAPE…APRF), 995–1105 (DSPT…EPTF), 1100–1205 (SEEP…SPTF), 1218–1317 (IQVP…SPDL), 1326–1429 (VPVV…APAF), 1430–1539 (ARDP…APVF), 1539–1642 (FASP…APAF), 1643–1744 (PQQE…SPTF), 1745–1848 (GNTH…APAF), 1849–1953 (PVPS…APAF), 1976–2061 (LATL…GPRF), 2062–2164 (PRAN…APRF), 2165–2270 (LQPH…RPTI), 2270–2369 (IPQP…VPIF), 2370–2475 (SQSL…APSF), 2476–2595 (TLPH…PPVF), 2596–2699 (TRAS…GPAF), 2700–2806 (PLSL…DPVF), and 2807–2926 (LAPS…APDL). A glycan (N-linked (GlcNAc...) asparagine) is linked at Asn396. A disordered region spans residues 951 to 971 (GPPGGPPHELEVEAQDGGSPP). Asn1711 is a glycosylation site (N-linked (GlcNAc...) asparagine). N-linked (GlcNAc...) asparagine glycosylation is present at Asn2354. An N-linked (GlcNAc...) asparagine glycan is attached at Asn2562. The chain crosses the membrane as a helical span at residues 2934–2954 (VAASLGVVVVLALAALVLGLV). Residues 2955–3291 (RARSRKAEAA…EPPDDTELRI (337 aa)) lie on the Cytoplasmic side of the membrane. A disordered region spans residues 2978 to 3033 (SLQKLGREPPSPPPSEHLYHQTLPSYGGPGAGGPYPRGGSLDPSHSSGRGSAEAAE). The segment covering 3004 to 3013 (GGPGAGGPYP) has biased composition (gly residues). Phosphoserine is present on Ser3048. 2 disordered regions span residues 3051–3080 (SSLAARGPDSGIQQDADGLSDTSCEPPAPD) and 3226–3291 (ASHR…ELRI). Positions 3237–3259 (SLSSAAMSPSFSPSLSPLAARSP) are enriched in low complexity. Residues 3270 to 3279 (PSASALSTES) are compositionally biased toward polar residues.

In terms of assembly, heterophilic interaction with FAT4; this interaction affects their respective protein levels.

It is found in the cell membrane. Its function is as follows. Calcium-dependent cell-adhesion protein. Mediates functions in neuroprogenitor cell proliferation and differentiation. The protein is Protocadherin-16 (Dchs1) of Rattus norvegicus (Rat).